We begin with the raw amino-acid sequence, 405 residues long: CRS2-associated factor 1, mitochondrial (405 aa).

A mitochondrion-targeting transit peptide spans 1-20; it reads MFLIRLSRHNPSSFTLLTRR. The interval 32 to 75 is disordered; that stretch reads RDLYNFQSPPPLSSSASENPDFNQKNNNKKKPKPQYRPPSSLEG. CRM domains are found at residues 157-255 and 277-373; these read ASLT…KRPK and DGLS…KEDD. The disordered stretch occupies residues 384 to 405; the sequence is SIDSDVDLSCSRGAQDSPDETT.

Part of large ribonucleo-protein complexes that include group IIB introns.

Its subcellular location is the mitochondrion. May be involved in the splicing of group IIB introns in mitochondria. This Arabidopsis thaliana (Mouse-ear cress) protein is CRS2-associated factor 1, mitochondrial.